A 396-amino-acid polypeptide reads, in one-letter code: MAKEKFERKKPHCNIGTIGHVDHGKTSLTAAITKVLAEAGGATFTAYDQIDKAPEEKARGITISTSHVEYETPNRHYAHVDCPGHADYVKNMITGAAQMDGAILVVSAADGPMPQTREHILLARQVGVPAIVVFLNKCDMVDDPELLELVELEVRELLSKYNFPGDKIPIIKGSALAALENSDEKLGRDAVLELMKNVDEYIPQPERPVDQPFLMPVEDVFSISGRGTVVTGRVERGIVKVGEEIEIVGIRPTQKTTVTGVEMFRKLLDQGQAGDNIGALLRGTKREDVERGQVLCKPGSVKPHTKFKAEAYILTKEEGGRHTPFFTNYRPQFYFRTTDVTGVVHLPEGTEMVMPGDNIAMEVHLIVPIAMEEKLRFAIREGGRTVGAGVVASIIE.

The region spanning 10–206 (KPHCNIGTIG…NVDEYIPQPE (197 aa)) is the tr-type G domain. The G1 stretch occupies residues 19 to 26 (GHVDHGKT). 19–26 (GHVDHGKT) serves as a coordination point for GTP. Threonine 26 contributes to the Mg(2+) binding site. The tract at residues 60–64 (GITIS) is G2. The interval 81-84 (DCPG) is G3. GTP contacts are provided by residues 81–85 (DCPGH) and 136–139 (NKCD). Residues 136–139 (NKCD) form a G4 region. Residues 174 to 176 (SAL) form a G5 region.

Belongs to the TRAFAC class translation factor GTPase superfamily. Classic translation factor GTPase family. EF-Tu/EF-1A subfamily. In terms of assembly, monomer.

Its subcellular location is the cytoplasm. The enzyme catalyses GTP + H2O = GDP + phosphate + H(+). In terms of biological role, GTP hydrolase that promotes the GTP-dependent binding of aminoacyl-tRNA to the A-site of ribosomes during protein biosynthesis. The polypeptide is Elongation factor Tu (Afipia carboxidovorans (strain ATCC 49405 / DSM 1227 / KCTC 32145 / OM5) (Oligotropha carboxidovorans)).